The chain runs to 833 residues: Leucine--tRNA ligase (833 aa).

The 'HIGH' region signature appears at Pro-41 to His-52. A 'KMSKS' region motif is present at residues Lys-610–Ser-614. Lys-613 contacts ATP.

This sequence belongs to the class-I aminoacyl-tRNA synthetase family.

It localises to the cytoplasm. It carries out the reaction tRNA(Leu) + L-leucine + ATP = L-leucyl-tRNA(Leu) + AMP + diphosphate. The protein is Leucine--tRNA ligase of Streptococcus pneumoniae (strain CGSP14).